Consider the following 2465-residue polypeptide: Protein DOP1A (2465 aa).

Disordered regions lie at residues 559-600 (PSGQ…SSES), 625-646 (GAAAIPIGSTSSETETASTVGS), and 705-733 (TEHQGDLGREQGETSKWDRNSQGDVKEKN). Low complexity predominate over residues 633–646 (STSSETETASTVGS). Over residues 707–733 (HQGDLGREQGETSKWDRNSQGDVKEKN) the composition is skewed to basic and acidic residues. A Phosphoserine modification is found at Ser1266. Composition is skewed to basic and acidic residues over residues 1282–1291 (EKETIVKESG) and 1305–1315 (KKDDDKKKSSN). A disordered region spans residues 1282–1315 (EKETIVKESGKQPGAKPKVKLARKKDDDKKKSSN).

Belongs to the DOP1 family.

The protein localises to the golgi apparatus membrane. Functionally, may be involved in protein traffic between late Golgi and early endosomes. This chain is Protein DOP1A, found in Homo sapiens (Human).